The sequence spans 83 residues: Small ribosomal subunit protein bS16c (83 aa).

The protein belongs to the bacterial ribosomal protein bS16 family.

It localises to the plastid. The protein localises to the chloroplast. The sequence is that of Small ribosomal subunit protein bS16c from Chaetosphaeridium globosum (Charophycean green alga).